A 381-amino-acid polypeptide reads, in one-letter code: Cytochrome b (381 aa).

Helical transmembrane passes span 36 to 56 (FGSLLAMCLIIQIITGLFLTM), 80 to 101 (WLIRTLHANGASFFFICIYIHI), 116 to 136 (WMVGVIILFLLMATAFMGYVL), and 181 to 201 (FYTFHFILPFIILMMTMIHLL). Residues His86 and His100 each coordinate heme b. Heme b contacts are provided by His185 and His199. Residue His204 coordinates a ubiquinone. The next 4 membrane-spanning stretches (helical) occupy residues 229-249 (FKDMIGFIIISFLLIFLTLTN), 291-311 (LGGVIALIMSILILIILPLTF), 323-343 (MNQILFWIMVVTIILLTWIGA), and 350-370 (YVFVGQVLTIMYFSYYIINPM).

This sequence belongs to the cytochrome b family. The main subunits of complex b-c1 are: cytochrome b, cytochrome c1 and the Rieske protein. Requires heme b as cofactor.

It localises to the mitochondrion inner membrane. In terms of biological role, component of the ubiquinol-cytochrome c reductase complex (complex III or cytochrome b-c1 complex) that is part of the mitochondrial respiratory chain. The b-c1 complex mediates electron transfer from ubiquinol to cytochrome c. Contributes to the generation of a proton gradient across the mitochondrial membrane that is then used for ATP synthesis. The sequence is that of Cytochrome b (MT-CYB) from Ostrinia nubilalis (European corn borer).